The chain runs to 1055 residues: Focal adhesion kinase 1 (1055 aa).

A disordered region spans residues 1–29 (MAAAYLDPNLNHTPSSSTKTHLGTGTERS). Alanine 2 is modified (N-acetylalanine). Residue tyrosine 5 is modified to Phosphotyrosine. Over residues 10–27 (LNHTPSSSTKTHLGTGTE) the composition is skewed to polar residues. Residue threonine 13 is modified to Phosphothreonine. 2 positions are modified to phosphoserine: serine 29 and serine 54. The 321-residue stretch at 35-355 (RVLKVFHYFE…GYCRLVNGAT (321 aa)) folds into the FERM domain. A Glycyl lysine isopeptide (Lys-Gly) (interchain with G-Cter in SUMO) cross-link involves residue lysine 152. Tyrosine 397 carries the phosphotyrosine; by autocatalysis modification. At tyrosine 407 the chain carries Phosphotyrosine. Residues 422–680 (IELGRCIGEG…ELKAQLSTIL (259 aa)) form the Protein kinase domain. Residues 428-434 (IGEGQFG), lysine 454, and 500-502 (ELC) each bind ATP. The Proton acceptor role is filled by aspartate 546. 2 positions are modified to phosphotyrosine: tyrosine 570 and tyrosine 576. Tyrosine 577 bears the Phosphotyrosine; by RET and SRC mark. Serine 580 is subject to Phosphoserine. Positions 685–697 (VQQEERMRMESRR) are enriched in basic and acidic residues. 2 disordered regions span residues 685-734 (VQQE…PSPQ) and 837-923 (VRLS…LDRS). The interaction with TGFB1I1 stretch occupies residues 707 to 1055 (GSDEAPPKPS…LKMLGQTRPH (349 aa)). Serine 722 carries the phosphoserine modification. Residue serine 732 is modified to Phosphoserine; by CDK5. Over residues 837–849 (VRLSRGSIDREDG) the composition is skewed to basic and acidic residues. Phosphoserine is present on serine 843. The residue at position 861 (tyrosine 861) is a Phosphotyrosine. Residues 869–880 (PAAPPKKPPRPG) are compositionally biased toward pro residues. Positions 886–896 (SNLSSISSPAE) are enriched in polar residues. At serine 913 the chain carries Phosphoserine. The interval 915-1055 (PPTANLDRSN…LKMLGQTRPH (141 aa)) is interaction with ARHGEF28. Threonine 917 carries the phosphothreonine modification. Tyrosine 928 is subject to Phosphotyrosine.

It belongs to the protein kinase superfamily. Tyr protein kinase family. FAK subfamily. In terms of assembly, interacts with GIT1. Component of a complex that contains at least FER, CTTN and PTK2/FAK1. Interacts with BMX. Interacts with STEAP4. Interacts with ZFYVE21. Interacts with ESR1. Interacts with PIK3R1 or PIK3R2. Interacts with FGR, FLT4 and RET. Interacts with EPHA2 in resting cells; activation of EPHA2 recruits PTPN11, leading to dephosphorylation of PTK2/FAK1 and dissociation of the complex. Interacts with EPHA1 (kinase activity-dependent). Interacts with P53/TP53. Interacts (via first Pro-rich region) with CAS family members (via SH3 domain), including BCAR1, BCAR3, and CASS4. Interacts with NEDD9 (via SH3 domain). Interacts with TGFB1I1. Interacts with SRC, GRB2 and GRB7. Interacts with ARHGEF28. Interacts with SHB. Part of a complex composed of THSD1, PTK2/FAK1, TLN1 and VCL. Interacts with PXN and TLN1. Interacts with SORBS1. Interacts with STAT1. Interacts with WASL. Interacts with ARHGAP26 and SHC1. Interacts with RB1CC1; this inhibits PTK2/FAK1 activity and activation of downstream signaling pathways. Interacts with ARHGEF7. Interacts with MDM2. Interacts with PIAS1. Interacts with DCC. Interacts with LPXN (via LD motif 3). Interacts with MISP. Interacts with EMP2; regulates PTK2 activation and localization. Interacts with DSCAM. Interacts with AMBRA1. Interacts (when tyrosine-phosphorylated) with tensin TNS1; the interaction is increased by phosphorylation of TNS1. Post-translationally, phosphorylated on tyrosine residues upon activation, e.g. upon integrin signaling. Tyr-397 is the major autophosphorylation site, but other kinases can also phosphorylate this residue. Phosphorylation at Tyr-397 promotes interaction with SRC and SRC family members, leading to phosphorylation at Tyr-576, Tyr-577 and at additional tyrosine residues. FGR promotes phosphorylation at Tyr-397 and Tyr-576. FER promotes phosphorylation at Tyr-577, Tyr-861 and Tyr-928, even when cells are not adherent. Tyr-397, Tyr-576 and Ser-722 are phosphorylated only when cells are adherent. Phosphorylation at Tyr-397 is important for interaction with BMX, PIK3R1 and SHC1. Phosphorylation at Tyr-928 is important for interaction with GRB2. Dephosphorylated by PTPN11; PTPN11 is recruited to PTK2 via EPHA2 (tyrosine phosphorylated). Microtubule-induced dephosphorylation at Tyr-397 is crucial for the induction of focal adhesion disassembly; this dephosphorylation could be catalyzed by PTPN11 and regulated by ZFYVE21. Phosphorylation on tyrosine residues is enhanced by NTN1. In terms of processing, sumoylated; this enhances autophosphorylation.

It localises to the cell junction. It is found in the focal adhesion. The protein localises to the cell membrane. Its subcellular location is the cytoplasm. The protein resides in the perinuclear region. It localises to the cell cortex. It is found in the cytoskeleton. The protein localises to the microtubule organizing center. Its subcellular location is the centrosome. The protein resides in the nucleus. It localises to the cilium basal body. It carries out the reaction L-tyrosyl-[protein] + ATP = O-phospho-L-tyrosyl-[protein] + ADP + H(+). Subject to autoinhibition, mediated by interactions between the FERM domain and the kinase domain. Activated by autophosphorylation at Tyr-397. This promotes interaction with SRC and phosphorylation at Tyr-576 and Tyr-577 in the kinase activation loop by SRC. Phosphorylation at Tyr-397, Tyr-576 and Tyr-577 is required for maximal kinase activity. In terms of biological role, non-receptor protein-tyrosine kinase that plays an essential role in regulating cell migration, adhesion, spreading, reorganization of the actin cytoskeleton, formation and disassembly of focal adhesions and cell protrusions, cell cycle progression, cell proliferation and apoptosis. Required for early embryonic development and placenta development. Required for embryonic angiogenesis, normal cardiomyocyte migration and proliferation, and normal heart development. Regulates axon growth and neuronal cell migration, axon branching and synapse formation; required for normal development of the nervous system. Plays a role in osteogenesis and differentiation of osteoblasts. Functions in integrin signal transduction, but also in signaling downstream of numerous growth factor receptors, G-protein coupled receptors (GPCR), EPHA2, netrin receptors and LDL receptors. Forms multisubunit signaling complexes with SRC and SRC family members upon activation; this leads to the phosphorylation of additional tyrosine residues, creating binding sites for scaffold proteins, effectors and substrates. Regulates numerous signaling pathways. Promotes activation of phosphatidylinositol 3-kinase and the AKT1 signaling cascade. Promotes activation of MAPK1/ERK2, MAPK3/ERK1 and the MAP kinase signaling cascade. Promotes localized and transient activation of guanine nucleotide exchange factors (GEFs) and GTPase-activating proteins (GAPs), and thereby modulates the activity of Rho family GTPases. Signaling via CAS family members mediates activation of RAC1. Phosphorylates NEDD9 following integrin stimulation. Recruits the ubiquitin ligase MDM2 to P53/TP53 in the nucleus, and thereby regulates P53/TP53 activity, P53/TP53 ubiquitination and proteasomal degradation. Phosphorylates SRC; this increases SRC kinase activity. Phosphorylates ACTN1, ARHGEF7, GRB7, RET and WASL. Promotes phosphorylation of PXN and STAT1; most likely PXN and STAT1 are phosphorylated by a SRC family kinase that is recruited to autophosphorylated PTK2/FAK1, rather than by PTK2/FAK1 itself. Promotes phosphorylation of BCAR1; GIT2 and SHC1; this requires both SRC and PTK2/FAK1. Promotes phosphorylation of BMX and PIK3R1. Functionally, does not contain a kinase domain and inhibits PTK2/FAK1 phosphorylation and signaling. Its enhanced expression can attenuate the nuclear accumulation of LPXN and limit its ability to enhance serum response factor (SRF)-dependent gene transcription. The polypeptide is Focal adhesion kinase 1 (Rattus norvegicus (Rat)).